Reading from the N-terminus, the 190-residue chain is MASRGTTETSKLKQNLEEQLDRLMQQLQDLEECREELDADEYEETKKETLEQLSEINDSLKKIMSGDMTLVDELSGMQLAIQAAISQAFKTPEVIRMFAKKQPRQLRTRLAEMDRDLMVGKLGRDLYTQQKVEILTALRKLGEKLTQDDETFLSANAGAALSQFEKVSSDLGSGDKVFALASFEVEKAKQ.

Residues 6–64 are a coiled coil; the sequence is TTETSKLKQNLEEQLDRLMQQLQDLEECREELDADEYEETKKETLEQLSEINDSLKKIM.

Belongs to the CTNNBIP1 family. In terms of assembly, does not interact with CTNNB1.

The polypeptide is Protein LZIC (LZIC) (Gallus gallus (Chicken)).